We begin with the raw amino-acid sequence, 122 residues long: Large ribosomal subunit protein bL20 (122 aa).

The protein belongs to the bacterial ribosomal protein bL20 family.

Functionally, binds directly to 23S ribosomal RNA and is necessary for the in vitro assembly process of the 50S ribosomal subunit. It is not involved in the protein synthesizing functions of that subunit. The chain is Large ribosomal subunit protein bL20 (rplT) from Treponema pallidum (strain Nichols).